Here is a 78-residue protein sequence, read N- to C-terminus: D-alanyl carrier protein (78 aa).

The Carrier domain occupies 1 to 78 (MEFKNQVYGI…HIAEQLAEMK (78 aa)). The residue at position 36 (Ser-36) is an O-(pantetheine 4'-phosphoryl)serine.

The protein belongs to the DltC family. 4'-phosphopantetheine is transferred from CoA to a specific serine of apo-DCP.

The protein localises to the cytoplasm. It participates in cell wall biogenesis; lipoteichoic acid biosynthesis. Functionally, carrier protein involved in the D-alanylation of lipoteichoic acid (LTA). The loading of thioester-linked D-alanine onto DltC is catalyzed by D-alanine--D-alanyl carrier protein ligase DltA. The DltC-carried D-alanyl group is further transferred to cell membrane phosphatidylglycerol (PG) by forming an ester bond, probably catalyzed by DltD. D-alanylation of LTA plays an important role in modulating the properties of the cell wall in Gram-positive bacteria, influencing the net charge of the cell wall. In Bacillus pumilus (strain SAFR-032), this protein is D-alanyl carrier protein.